The primary structure comprises 318 residues: L-lactate dehydrogenase (318 aa).

Residues Val18, Asp39, Lys44, Tyr69, and 83–84 (GA) each bind NAD(+). Residues Gln86 and Arg92 each coordinate substrate. Residues Ser105, 122–124 (VSN), and Ser147 contribute to the NAD(+) site. Substrate is bound at residue 124–127 (NPVD). 152–155 (DTSR) contacts substrate. The active-site Proton acceptor is the His179. Tyr225 carries the phosphotyrosine modification. Substrate is bound at residue Thr234.

The protein belongs to the LDH/MDH superfamily. LDH family. Homotetramer.

The protein resides in the cytoplasm. It catalyses the reaction (S)-lactate + NAD(+) = pyruvate + NADH + H(+). It functions in the pathway fermentation; pyruvate fermentation to lactate; (S)-lactate from pyruvate: step 1/1. In terms of biological role, catalyzes the conversion of lactate to pyruvate. In Clostridium botulinum (strain Langeland / NCTC 10281 / Type F), this protein is L-lactate dehydrogenase.